Consider the following 74-residue polypeptide: Sec-independent protein translocase protein TatA (74 aa).

A helical membrane pass occupies residues 1-21; the sequence is MGGISIWQLLIIVAIVVLLFG. The disordered stretch occupies residues 45 to 74; it reads EEPKDAEFKSLDKAENTAQTKKEEKEKEQA.

The protein belongs to the TatA/E family. As to quaternary structure, the Tat system comprises two distinct complexes: a TatABC complex, containing multiple copies of TatA, TatB and TatC subunits, and a separate TatA complex, containing only TatA subunits. Substrates initially bind to the TatABC complex, which probably triggers association of the separate TatA complex to form the active translocon.

It localises to the cell inner membrane. Its function is as follows. Part of the twin-arginine translocation (Tat) system that transports large folded proteins containing a characteristic twin-arginine motif in their signal peptide across membranes. TatA could form the protein-conducting channel of the Tat system. In Actinobacillus succinogenes (strain ATCC 55618 / DSM 22257 / CCUG 43843 / 130Z), this protein is Sec-independent protein translocase protein TatA.